The following is a 218-amino-acid chain: Ribose-5-phosphate isomerase A (218 aa).

Substrate contacts are provided by residues 28–31 (TGST), 81–84 (DGAD), and 94–97 (KGGG). The Proton acceptor role is filled by Glu103. Position 121 (Lys121) interacts with substrate.

This sequence belongs to the ribose 5-phosphate isomerase family. As to quaternary structure, homodimer.

The enzyme catalyses aldehydo-D-ribose 5-phosphate = D-ribulose 5-phosphate. Its pathway is carbohydrate degradation; pentose phosphate pathway; D-ribose 5-phosphate from D-ribulose 5-phosphate (non-oxidative stage): step 1/1. Catalyzes the reversible conversion of ribose-5-phosphate to ribulose 5-phosphate. This Alcanivorax borkumensis (strain ATCC 700651 / DSM 11573 / NCIMB 13689 / SK2) protein is Ribose-5-phosphate isomerase A.